Reading from the N-terminus, the 154-residue chain is Fibroblast growth factor 2 (154 aa).

The propeptide occupies 1 to 9; it reads MAASGITSL. N35 serves as a coordination point for heparin. At Y81 the chain carries Phosphotyrosine; by TEC. K94 is covalently cross-linked (Glycyl lysine isopeptide (Lys-Gly) (interchain with G-Cter in SUMO1)). A heparin-binding region spans residues 127–143; sequence KRTGQYKLGSKTGPGQK.

Belongs to the heparin-binding growth factors family. Monomer. Homodimer. Interacts with FGFR1, FGFR2, FGFR3 and FGFR4. Affinity between fibroblast growth factors (FGFs) and their receptors is increased by heparan sulfate glycosaminoglycans that function as coreceptors. Interacts with CSPG4, FGFBP1 and TEC. Found in a complex with FGFBP1, FGF1 and FGF2. Interacts with FGFBP3. Interacts with integrin ITGAV:ITGB3; the interaction is required for FGF2 signaling. Interacts with SNORC (via the extracellular domain). Interacts with glypican GPC3. Post-translationally, phosphorylation at Tyr-81 regulates FGF2 unconventional secretion.

It is found in the secreted. The protein localises to the nucleus. In terms of biological role, acts as a ligand for FGFR1, FGFR2, FGFR3 and FGFR4. Also acts as an integrin ligand which is required for FGF2 signaling. Binds to integrin ITGAV:ITGB3. Plays an important role in the regulation of cell survival, cell division, cell differentiation and cell migration. Functions as a potent mitogen in vitro. Can induce angiogenesis. Mediates phosphorylation of ERK1/2 and thereby promotes retinal lens fiber differentiation. The sequence is that of Fibroblast growth factor 2 (Fgf2) from Mus musculus (Mouse).